Here is a 569-residue protein sequence, read N- to C-terminus: Protein Noxp20 (569 aa).

3 disordered regions span residues 1–87, 102–126, and 165–208; these read MSDD…GEVT, GDTGSEIPLKEQDDAAVDPSSQAGR, and ANSA…GSRG. Thr197 is subject to Phosphothreonine. Ser262 is modified (phosphoserine). The interval 404-439 is disordered; that stretch reads VSIDVAKGSEEEEKEEGKEEKAEEPEEDKTGGQGAK.

This sequence belongs to the FAM114 family. As to expression, over-expressed in brain. Also detected in lung, stomach, and in a lower extent in testis and thymus.

The protein localises to the cytoplasm. May play a role in neuronal cell development. The polypeptide is Protein Noxp20 (Fam114a1) (Mus musculus (Mouse)).